The primary structure comprises 51 residues: Methionine aminopeptidase (51 aa).

Belongs to the peptidase M24A family. Methionine aminopeptidase type 1 subfamily. As to quaternary structure, monomer. Requires Co(2+) as cofactor. Zn(2+) serves as cofactor. Mn(2+) is required as a cofactor. The cofactor is Fe(2+).

It carries out the reaction Release of N-terminal amino acids, preferentially methionine, from peptides and arylamides.. Removes the N-terminal methionine from nascent proteins. The N-terminal methionine is often cleaved when the second residue in the primary sequence is small and uncharged (Met-Ala-, Cys, Gly, Pro, Ser, Thr, or Val). Requires deformylation of the N(alpha)-formylated initiator methionine before it can be hydrolyzed. In Geobacillus stearothermophilus (Bacillus stearothermophilus), this protein is Methionine aminopeptidase (map).